The chain runs to 113 residues: Large ribosomal subunit protein eL34 (113 aa).

This sequence belongs to the eukaryotic ribosomal protein eL34 family.

The protein is Large ribosomal subunit protein eL34 of Methanopyrus kandleri (strain AV19 / DSM 6324 / JCM 9639 / NBRC 100938).